A 1119-amino-acid chain; its full sequence is DNA-directed RNA polymerase subunit beta (1119 aa).

This sequence belongs to the RNA polymerase beta chain family. As to quaternary structure, the RNAP catalytic core consists of 2 alpha, 1 beta, 1 beta' and 1 omega subunit. When a sigma factor is associated with the core the holoenzyme is formed, which can initiate transcription.

The enzyme catalyses RNA(n) + a ribonucleoside 5'-triphosphate = RNA(n+1) + diphosphate. Functionally, DNA-dependent RNA polymerase catalyzes the transcription of DNA into RNA using the four ribonucleoside triphosphates as substrates. The polypeptide is DNA-directed RNA polymerase subunit beta (Thermus aquaticus).